The following is a 120-amino-acid chain: 2-amino-4-hydroxy-6-hydroxymethyldihydropteridine pyrophosphokinase (120 aa).

This sequence belongs to the HPPK family.

It catalyses the reaction 6-hydroxymethyl-7,8-dihydropterin + ATP = (7,8-dihydropterin-6-yl)methyl diphosphate + AMP + H(+). It functions in the pathway cofactor biosynthesis; tetrahydrofolate biosynthesis; 2-amino-4-hydroxy-6-hydroxymethyl-7,8-dihydropteridine diphosphate from 7,8-dihydroneopterin triphosphate: step 4/4. In terms of biological role, catalyzes the transfer of pyrophosphate from adenosine triphosphate (ATP) to 6-hydroxymethyl-7,8-dihydropterin, an enzymatic step in folate biosynthesis pathway. The protein is 2-amino-4-hydroxy-6-hydroxymethyldihydropteridine pyrophosphokinase (folK) of Pseudomonas putida (Arthrobacter siderocapsulatus).